The sequence spans 362 residues: Heat-inducible transcription repressor HrcA (362 aa).

This sequence belongs to the HrcA family.

Functionally, negative regulator of class I heat shock genes (grpE-dnaK-dnaJ and groELS operons). Prevents heat-shock induction of these operons. The polypeptide is Heat-inducible transcription repressor HrcA (Nitrobacter winogradskyi (strain ATCC 25391 / DSM 10237 / CIP 104748 / NCIMB 11846 / Nb-255)).